The primary structure comprises 137 residues: Fatty acid-binding protein homolog 8 (137 aa).

A Nuclear localization signal motif is present at residues 24-34 (KEIGVGLLIRK).

Belongs to the calycin superfamily. Fatty-acid binding protein (FABP) family. Monomer. In terms of tissue distribution, intestine.

Its subcellular location is the lysosome. The protein localises to the nucleus. Functionally, lysosomal lipid chaperone which binds to a wide range of unsaturated fatty acids, including high affinity binding to oleic acid and oleoylethanolamide, to transport them into the nucleus. As part of a lysosome-to-nucleus retrograde lipid signaling pathway, translocates into the nucleus where it activates the transcription of genes promoting longevity and activation of mitochondrial beta oxidation. The chain is Fatty acid-binding protein homolog 8 from Caenorhabditis elegans.